Here is a 512-residue protein sequence, read N- to C-terminus: Retinaldehyde dehydrogenase 3 (512 aa).

Residues 1 to 22 form a disordered region; sequence MATANGAVENGQPDRKPPALPR. Residue A2 is modified to N-acetylalanine. Residues K204, E207, and 257–262 each bind NAD(+); that span reads GSTEVG. Catalysis depends on E280, which acts as the Proton acceptor. The active-site Nucleophile is the C314. Residues Q361 and E411 each coordinate NAD(+).

The protein belongs to the aldehyde dehydrogenase family. In terms of assembly, homotetramer. In terms of tissue distribution, expressed at low levels in many tissues and at higher levels in salivary gland, stomach, and kidney.

Its subcellular location is the cytoplasm. The catalysed reaction is all-trans-retinal + NAD(+) + H2O = all-trans-retinoate + NADH + 2 H(+). It carries out the reaction retinal + NAD(+) + H2O = retinoate + NADH + 2 H(+). It catalyses the reaction all-trans-13,14-dihydroretinal + NAD(+) + H2O = all-trans-13,14-dihydroretinoate + NADH + 2 H(+). It participates in cofactor metabolism; retinol metabolism. Functionally, catalyzes the NAD-dependent oxidation of aldehyde substrates, such as all-trans-retinal and all-trans-13,14-dihydroretinal, to their corresponding carboxylic acids, all-trans-retinoate and all-trans-13,14-dihydroretinoate, respectively. High specificity for all-trans-retinal as substrate, can also accept acetaldehyde as substrate in vitro but with lower affinity. Required for the biosynthesis of normal levels of retinoate in the embryonic ocular and nasal regions; a critical lipid in the embryonic development of the eye and the nasal region. This chain is Retinaldehyde dehydrogenase 3 (ALDH1A3), found in Homo sapiens (Human).